A 467-amino-acid polypeptide reads, in one-letter code: Histidine--tRNA ligase (467 aa).

The protein belongs to the class-II aminoacyl-tRNA synthetase family. As to quaternary structure, homodimer.

It localises to the cytoplasm. The enzyme catalyses tRNA(His) + L-histidine + ATP = L-histidyl-tRNA(His) + AMP + diphosphate + H(+). The polypeptide is Histidine--tRNA ligase (Gloeobacter violaceus (strain ATCC 29082 / PCC 7421)).